Reading from the N-terminus, the 251-residue chain is 5'-nucleotidase SurE (251 aa).

A divalent metal cation-binding residues include aspartate 8, aspartate 9, serine 39, and asparagine 95.

Belongs to the SurE nucleotidase family. A divalent metal cation serves as cofactor.

It localises to the cytoplasm. It carries out the reaction a ribonucleoside 5'-phosphate + H2O = a ribonucleoside + phosphate. Nucleotidase that shows phosphatase activity on nucleoside 5'-monophosphates. This chain is 5'-nucleotidase SurE, found in Ralstonia nicotianae (strain ATCC BAA-1114 / GMI1000) (Ralstonia solanacearum).